Consider the following 1171-residue polypeptide: DNA-directed RNA polymerase subunit beta (1171 aa).

This sequence belongs to the RNA polymerase beta chain family. As to quaternary structure, the RNAP catalytic core consists of 2 alpha, 1 beta, 1 beta' and 1 omega subunit. When a sigma factor is associated with the core the holoenzyme is formed, which can initiate transcription.

The enzyme catalyses RNA(n) + a ribonucleoside 5'-triphosphate = RNA(n+1) + diphosphate. DNA-dependent RNA polymerase catalyzes the transcription of DNA into RNA using the four ribonucleoside triphosphates as substrates. This Corynebacterium efficiens (strain DSM 44549 / YS-314 / AJ 12310 / JCM 11189 / NBRC 100395) protein is DNA-directed RNA polymerase subunit beta.